The primary structure comprises 209 residues: Outer-membrane lipoprotein carrier protein (209 aa).

The N-terminal stretch at methionine 1–alanine 21 is a signal peptide.

This sequence belongs to the LolA family. As to quaternary structure, monomer.

It localises to the periplasm. Its function is as follows. Participates in the translocation of lipoproteins from the inner membrane to the outer membrane. Only forms a complex with a lipoprotein if the residue after the N-terminal Cys is not an aspartate (The Asp acts as a targeting signal to indicate that the lipoprotein should stay in the inner membrane). In Xanthomonas campestris pv. campestris (strain 8004), this protein is Outer-membrane lipoprotein carrier protein.